Reading from the N-terminus, the 405-residue chain is Deoxyguanosinetriphosphate triphosphohydrolase-like protein (405 aa).

One can recognise an HD domain in the interval 75 to 219 (RLTHTIEVAQ…AAIADDIAYN (145 aa)).

It belongs to the dGTPase family. Type 2 subfamily.

The sequence is that of Deoxyguanosinetriphosphate triphosphohydrolase-like protein from Rhizobium johnstonii (strain DSM 114642 / LMG 32736 / 3841) (Rhizobium leguminosarum bv. viciae).